A 178-amino-acid chain; its full sequence is ATP-dependent protease subunit HslV (178 aa).

T7 is an active-site residue. G162, C165, and T168 together coordinate Na(+).

It belongs to the peptidase T1B family. HslV subfamily. As to quaternary structure, a double ring-shaped homohexamer of HslV is capped on each side by a ring-shaped HslU homohexamer. The assembly of the HslU/HslV complex is dependent on binding of ATP.

Its subcellular location is the cytoplasm. The enzyme catalyses ATP-dependent cleavage of peptide bonds with broad specificity.. Its activity is regulated as follows. Allosterically activated by HslU binding. Its function is as follows. Protease subunit of a proteasome-like degradation complex believed to be a general protein degrading machinery. This Leptothrix cholodnii (strain ATCC 51168 / LMG 8142 / SP-6) (Leptothrix discophora (strain SP-6)) protein is ATP-dependent protease subunit HslV.